Reading from the N-terminus, the 492-residue chain is uncharacterized protein (492 aa).

Residues 1–22 form the signal peptide; that stretch reads MIRPNMFALLMLVVLAITSVNA. Residues N92, N97, N119, N146, N213, N267, and N458 are each glycosylated (N-linked (GlcNAc...) asparagine; by host).

It localises to the secreted. This is an uncharacterized protein from Acanthamoeba polyphaga (Amoeba).